A 242-amino-acid polypeptide reads, in one-letter code: MATLCLFDMDGTLTAPRQKITEEMDGFLQKLRQKTKIGVVGGSDFEKLQEQLGNDVVEKYDYVFPENGLVAYKDGKLLCKQNIQGHLGEDVIQDLINYCLSYIANIKLPKKRGTFIEFRNGMLNVSPIGRSCSQEERIEFYELDKKEHIRQKFVADLRKEFAGKGLTFSIGGQISIDVFPEGWDKRYCLRHLEHAGYKTIYFFGDKTMPGGNDHEIFTDPRTVGYTVTAPEDTRRICEGLFP.

The active-site Nucleophile is aspartate 8. Mg(2+) is bound by residues aspartate 8 and aspartate 10. Aspartate 10 functions as the Proton donor/acceptor in the catalytic mechanism. The alpha-D-mannose 1-phosphate site is built by arginine 17, arginine 119, arginine 130, and arginine 137. Position 145 is an N6-acetyllysine (lysine 145). Alpha-D-mannose 1-phosphate contacts are provided by serine 175 and aspartate 177. Mg(2+) contacts are provided by aspartate 205, phenylalanine 217, aspartate 219, and threonine 222.

The protein belongs to the eukaryotic PMM family. As to quaternary structure, homodimer.

Its subcellular location is the cytoplasm. The catalysed reaction is alpha-D-mannose 1-phosphate = D-mannose 6-phosphate. The protein operates within nucleotide-sugar biosynthesis; GDP-alpha-D-mannose biosynthesis; alpha-D-mannose 1-phosphate from D-fructose 6-phosphate: step 2/2. Its function is as follows. Involved in the synthesis of the GDP-mannose and dolichol-phosphate-mannose required for a number of critical mannosyl transfer reactions. The protein is Phosphomannomutase 2 (Pmm2) of Mus musculus (Mouse).